A 318-amino-acid polypeptide reads, in one-letter code: Tyrosine--tRNA ligase (318 aa).

Y35 serves as a coordination point for L-tyrosine. The short motif at 40–48 is the 'HIGH' region element; it reads PSGKVHLGH. L-tyrosine is bound by residues Y154, Q158, D161, and Q176. A 'KMSKS' region motif is present at residues 211 to 215; the sequence is KMSSS. S214 is a binding site for ATP.

It belongs to the class-I aminoacyl-tRNA synthetase family. TyrS type 3 subfamily. In terms of assembly, homodimer.

It localises to the cytoplasm. The catalysed reaction is tRNA(Tyr) + L-tyrosine + ATP = L-tyrosyl-tRNA(Tyr) + AMP + diphosphate + H(+). In terms of biological role, catalyzes the attachment of tyrosine to tRNA(Tyr) in a two-step reaction: tyrosine is first activated by ATP to form Tyr-AMP and then transferred to the acceptor end of tRNA(Tyr). The polypeptide is Tyrosine--tRNA ligase (Methanosphaera stadtmanae (strain ATCC 43021 / DSM 3091 / JCM 11832 / MCB-3)).